Consider the following 174-residue polypeptide: Small heat shock protein OV25-1 (174 aa).

One can recognise a sHSP domain in the interval 50–161 (LNECNIGNTL…ASRNIPIRAS (112 aa)). The interval 153 to 174 (SRNIPIRASPKEPEAKQKTKKQ) is disordered. Positions 161–174 (SPKEPEAKQKTKKQ) are enriched in basic and acidic residues.

This sequence belongs to the small heat shock protein (HSP20) family.

In Onchocerca volvulus, this protein is Small heat shock protein OV25-1 (OV25-1).